The chain runs to 491 residues: Leucine aminopeptidase 1 (491 aa).

2 residues coordinate Zn(2+): lysine 252 and aspartate 257. Residue lysine 264 is part of the active site. Residues aspartate 275, aspartate 334, and glutamate 336 each contribute to the Zn(2+) site. The active site involves arginine 338.

It belongs to the peptidase M17 family. Zn(2+) serves as cofactor. In terms of tissue distribution, expressed in the buccal cavity, pharynx, anterior gut and rectum.

It carries out the reaction Release of an N-terminal amino acid, Xaa-|-Yaa-, in which Xaa is preferably Leu, but may be other amino acids including Pro although not Arg or Lys, and Yaa may be Pro. Amino acid amides and methyl esters are also readily hydrolyzed, but rates on arylamides are exceedingly low.. In terms of biological role, probably acts as a digestive enzyme. This Caenorhabditis elegans protein is Leucine aminopeptidase 1 (lap-1).